Here is a 511-residue protein sequence, read N- to C-terminus: 2,3-bisphosphoglycerate-independent phosphoglycerate mutase (511 aa).

Residue D12 coordinates Mn(2+). At Y36 the chain carries Phosphotyrosine. Position 62 (S62) interacts with Mn(2+). S62 functions as the Phosphoserine intermediate in the catalytic mechanism. Residues H123, 153–154 (RD), R185, R191, 261–264 (RPDR), and K336 contribute to the substrate site. Mn(2+)-binding residues include D403, H407, D444, H445, and H462.

The protein belongs to the BPG-independent phosphoglycerate mutase family. In terms of assembly, monomer. It depends on Mn(2+) as a cofactor.

The catalysed reaction is (2R)-2-phosphoglycerate = (2R)-3-phosphoglycerate. Its pathway is carbohydrate degradation; glycolysis; pyruvate from D-glyceraldehyde 3-phosphate: step 3/5. Its function is as follows. Essential for rapid growth and for sporulation. Catalyzes the interconversion of 2-phosphoglycerate and 3-phosphoglycerate. This is 2,3-bisphosphoglycerate-independent phosphoglycerate mutase from Bacillus licheniformis (strain ATCC 14580 / DSM 13 / JCM 2505 / CCUG 7422 / NBRC 12200 / NCIMB 9375 / NCTC 10341 / NRRL NRS-1264 / Gibson 46).